The following is a 290-amino-acid chain: Xylanase inhibitor protein 2 (290 aa).

The N-terminal stretch at 1–27 (MGLVHALLPFAAAAALLLLAAPPPATA) is a signal peptide. Residues 30–290 (PGLAVYWGRH…DKKANYTGEG (261 aa)) form the GH18 domain. A disulfide bridge links C49 with C89. An N-linked (GlcNAc...) asparagine glycan is attached at N112. Cysteines 187 and 216 form a disulfide. N285 carries an N-linked (GlcNAc...) asparagine glycan.

It belongs to the glycosyl hydrolase 18 family. Xylanase inhibitor subfamily. As to quaternary structure, binds to fungal GH10 xylanases.

It is found in the secreted. In terms of biological role, fungal xylanase inhibitor. Possesses competitive inhibiting activity against several fungal endo-1,4-beta-D-xylanases belonging to glycoside hydrolase family 10 (GH10) and family 11 (GH11). May function in plant defense against secreted fungal pathogen xylanases. Is similar to class III chitinases, but does not exhibit chitinase activity. The sequence is that of Xylanase inhibitor protein 2 from Oryza sativa subsp. japonica (Rice).